The primary structure comprises 121 residues: Putative iron-sulfur cluster insertion protein ErpA (121 aa).

Positions 49, 113, and 115 each coordinate iron-sulfur cluster.

Belongs to the HesB/IscA family. Homodimer. Requires iron-sulfur cluster as cofactor.

Its function is as follows. Required for insertion of 4Fe-4S clusters. This is Putative iron-sulfur cluster insertion protein ErpA from Paracidovorax citrulli (strain AAC00-1) (Acidovorax citrulli).